Reading from the N-terminus, the 770-residue chain is Shutoff protein (770 aa).

Disordered stretches follow at residues 1–20 (MEED…PNSE) and 30–49 (EEEN…PEDG). The span at 10–19 (DSETLTTPNS) shows a compositional bias: polar residues. The binding to host EIF4G stretch occupies residues 248 to 312 (VMDQVLIKRA…AVLVTVELEC (65 aa)). An RRM domain is found at 315–433 (RFFANPQTLR…ELWTSFDERT (119 aa)). Residues tyrosine 332 and tyrosine 647 each carry the phosphotyrosine; by host modification. A disordered region spans residues 661-770 (LSAAASCRSQ…TATMFTESQP (110 aa)). A compositionally biased stretch (basic residues) spans 726 to 739 (GGPRGRGGRNHRQR). The span at 742-755 (TIFQKTRSEPTSEN) shows a compositional bias: polar residues.

It belongs to the adenoviridae shutoff protein family. As to quaternary structure, monomer. Interacts with hexon protein; this interaction allows chaperoning and trimerization of hexon proteins. Interacts (via N-terminus) with host initiation factor EIF4G (via C-terminus). Interacts (via RRM domain) with viral mRNAs that contain the tripartite leader; this interaction allows ribosome shunting and expression of viral late mRNAs. Post-translationally, might be cleaved by the viral protease. Phosphorylated. Tyrosine phosphorylation enhances preferential binding to tripartite leader mRNAs and allows ribosome shunting. In terms of processing, methylated. Asymmetric dimethylation by host PRMT1 of the Arg/Gly-rich region may regulate shutoff protein binding to hexon and promote the capsid assembly in the nucleus.

The protein localises to the host cytoplasm. Functionally, protein that inhibits host translation while promoting late viral translation by ribosome shunting. Blocks host cap-dependent translation by binding to eIF4G, displacing MKNK1 from cap initiation complexes and preventing EIF4E phosphorylation. Binds to the tripartite leader sequence of viral late mRNAs and recruits host eIF4G, PABPC1/poly-A binding protein and 40S ribosomes subunits on viral mRNAs, allowing ribosome shunting and efficient translation of late viral mRNAs even though conventional translation via ribosome scanning from the cap has been shut off in the host cell. During assembly, acts as a chaperone protein that helps hexon proteins assembly into trimers. This is Shutoff protein from Human adenovirus F serotype 40 (HAdV-40).